Reading from the N-terminus, the 102-residue chain is Envelope protein US9 (102 aa).

Residues 1 to 75 (MAGQNTMEGE…KIYHRKKFCY (75 aa)) are Intravirion-facing. A Di-leucine internalization motif motif is present at residues 14-15 (LL). The acidic stretch occupies residues 41–55 (EKCYYSDSENETADE). Residues S46 and S48 each carry the phosphoserine; by host CK2 modification. Residues 76–96 (ITLIIVFVFAMTGAAFALGYI) form a helical; Signal-anchor for type II membrane protein membrane-spanning segment. Residues 97–102 (TSQFVG) are Virion surface-facing.

This sequence belongs to the alphaherpesvirinae envelope protein US9 family. Post-translationally, phosphorylated on serines within the acidic cluster, possibly by host CK2. Phosphorylation determines whether endocytosed viral US9 traffics to the trans-Golgi network or recycles to the cell membrane.

The protein localises to the virion membrane. Its subcellular location is the host Golgi apparatus membrane. The protein resides in the host Golgi apparatus. It is found in the host trans-Golgi network. It localises to the host cell membrane. Essential for the anterograde spread of the infection throughout the host nervous system. Together with the gE/gI heterodimer, US9 is involved in the sorting and transport of viral structural components toward axon tips. The polypeptide is Envelope protein US9 (Varicella-zoster virus (strain Dumas) (HHV-3)).